The primary structure comprises 389 residues: Succinate--CoA ligase [ADP-forming] subunit beta (389 aa).

The 238-residue stretch at 9 to 246 (KEILRRHNAN…ITEEDPYEVK (238 aa)) folds into the ATP-grasp domain. Residues K48, 55-57 (GRG), E101, L104, and E109 each bind ATP. Residues N201 and D215 each coordinate Mg(2+). Residues N266 and 323-325 (GIV) each bind substrate.

The protein belongs to the succinate/malate CoA ligase beta subunit family. Heterotetramer of two alpha and two beta subunits. Mg(2+) is required as a cofactor.

The catalysed reaction is succinate + ATP + CoA = succinyl-CoA + ADP + phosphate. The enzyme catalyses GTP + succinate + CoA = succinyl-CoA + GDP + phosphate. Its pathway is carbohydrate metabolism; tricarboxylic acid cycle; succinate from succinyl-CoA (ligase route): step 1/1. Succinyl-CoA synthetase functions in the citric acid cycle (TCA), coupling the hydrolysis of succinyl-CoA to the synthesis of either ATP or GTP and thus represents the only step of substrate-level phosphorylation in the TCA. The beta subunit provides nucleotide specificity of the enzyme and binds the substrate succinate, while the binding sites for coenzyme A and phosphate are found in the alpha subunit. This chain is Succinate--CoA ligase [ADP-forming] subunit beta, found in Leptospira biflexa serovar Patoc (strain Patoc 1 / Ames).